The primary structure comprises 158 residues: Endolysin (158 aa).

Glu-19 is an active-site residue.

This sequence belongs to the glycosyl hydrolase 24 family. Monomer.

It localises to the host cytoplasm. The enzyme catalyses Endolytic cleavage of the (1-&gt;4)-beta-glycosidic linkage between N-acetylmuramic acid (MurNAc) and N-acetylglucosamine (GlcNAc) residues in peptidoglycan with concomitant formation of a 1,6-anhydrobond in the MurNAc residue.. Its activity is regulated as follows. Inactivated by zinc. Functionally, endolysin with transglycosylase activity that degrades host peptidoglycans and participates with the holin and spanin proteins in the sequential events which lead to the programmed host cell lysis releasing the mature viral particles. Once the holin has permeabilized the host cell membrane, the endolysin can reach the periplasm and break down the peptidoglycan layer. The protein is Endolysin (R) of Escherichia coli (Bacteriophage lambda).